The sequence spans 86 residues: Cell division topological specificity factor (86 aa).

The protein belongs to the MinE family.

In terms of biological role, prevents the cell division inhibition by proteins MinC and MinD at internal division sites while permitting inhibition at polar sites. This ensures cell division at the proper site by restricting the formation of a division septum at the midpoint of the long axis of the cell. This Aliivibrio salmonicida (strain LFI1238) (Vibrio salmonicida (strain LFI1238)) protein is Cell division topological specificity factor.